The chain runs to 1071 residues: SLIT-ROBO Rho GTPase-activating protein 2 (1071 aa).

In terms of domain architecture, F-BAR spans 22–325; sequence KEIRAQLTEQ…AVENLDATSD (304 aa). Basic and acidic residues predominate over residues 181–203; sequence LKEAEKQEEKQIGKSVKQEDRQT. A disordered region spans residues 181 to 211; the sequence is LKEAEKQEEKQIGKSVKQEDRQTPRSPDSTA. The residue at position 206 (Ser206) is a Phosphoserine. A coiled-coil region spans residues 363–401; sequence QSELVQRCQQLQSRLSTLKIENEEVKKTMEATLQTIQDI. 4 positions are modified to phosphoserine: Ser427, Ser500, Ser691, and Ser695. Residues 489 to 679 enclose the Rho-GAP domain; sequence ARRSSTVRKQ…TIIIQHENIF (191 aa). The disordered stretch occupies residues 700-726; it reads CDSTHGETTSAEDSTQDVTAEHHTSDD. Positions 705-717 are enriched in polar residues; it reads GETTSAEDSTQDV. Ser724 is modified (phosphoserine). Positions 728 to 787 constitute an SH3 domain; it reads CEPIEAIAKFDYVGRTARELSFKKGASLLLYQRASDDWWEGRHNGIDGLIPHQYIVVQDT. Ser795 bears the Phosphoserine mark. 2 disordered regions span residues 795–819 and 838–918; these read SSPKSEIEVMSEPPEEKVTARTGAS and RKRP…DSPQ. Residues 855-868 show a composition bias toward low complexity; sequence HGLGSSLTDSSSLG. Composition is skewed to polar residues over residues 874–885 and 897–907; these read RPSSQPIMSQNL and GHGSLNSISRH. Ser916 carries the phosphoserine modification. Symmetric dimethylarginine; by PRMT5 is present on Arg927. The residue at position 930 (Ser930) is a Phosphoserine. Residues 940–968 adopt a coiled-coil conformation; the sequence is EVIAQDIEATMNSALNELQELERQSSAKH. Residues 984 to 1012 are disordered; sequence PVVAPTSEPSSPLHTQLLKDPEPAFQRSA. Phosphoserine occurs at positions 990, 994, 1013, and 1027. The segment at 1029 to 1071 is disordered; the sequence is KMAAPVKPPATRPKPTVFPKTNATSPGVNSSASPQATDKSCTV. Over residues 1047–1071 the composition is skewed to polar residues; the sequence is PKTNATSPGVNSSASPQATDKSCTV.

In terms of assembly, homodimer. Forms a heterooligomer with SRGAP1 and SRGAP3 through its F-BAR domain. Interacts (via SH3 domain) with GPHN. Interacts (via SH3 domain) with FMNL1 (activated by RAC1); regulates the actin filament severing activity of FMNL1 and actin dynamics. Interacts (via SH3 domain) with FMNL3. Interacts with RAC1; specifically stimulates RAC1 GTPase activity. Interacts (via F-BAR domain) with HOMER1. Interacts with ROBO1 and ROBO2. Interacts with FASLG. Interacts with PRMT5. Post-translationally, methylation at Arg-927 is required for the stimulation of cell migration, dimerization and localization at the plasma membrane protrusions.

It is found in the cell membrane. The protein resides in the cell projection. It localises to the dendritic spine. Its subcellular location is the postsynaptic density. The protein localises to the postsynaptic cell membrane. It is found in the lamellipodium. The protein resides in the cytoplasmic vesicle. It localises to the phagosome. Its subcellular location is the nucleus. The protein localises to the cytoplasm. It is found in the cytosol. In terms of biological role, postsynaptic RAC1 GTPase activating protein (GAP) that plays a key role in neuronal morphogenesis and migration mainly during development of the cerebral cortex. Regulates excitatory and inhibitory synapse maturation and density in cortical pyramidal neurons. SRGAP2/SRGAP2A limits excitatory and inhibitory synapse density through its RAC1-specific GTPase activating activity, while it promotes maturation of both excitatory and inhibitory synapses through its ability to bind to the postsynaptic scaffolding protein HOMER1 at excitatory synapses, and the postsynaptic protein GPHN at inhibitory synapses. Mechanistically, acts by binding and deforming membranes, thereby regulating actin dynamics to regulate cell migration and differentiation. Promotes cell repulsion and contact inhibition of locomotion: localizes to protrusions with curved edges and controls the duration of RAC1 activity in contact protrusions. In non-neuronal cells, may also play a role in cell migration by regulating the formation of lamellipodia and filopodia. The protein is SLIT-ROBO Rho GTPase-activating protein 2 of Mus musculus (Mouse).